Here is a 512-residue protein sequence, read N- to C-terminus: 2-isopropylmalate synthase (512 aa).

In terms of domain architecture, Pyruvate carboxyltransferase spans 5–268 (LIIFDTTLRD…ELGIDTQHIV (264 aa)). Residues aspartate 14, histidine 202, histidine 204, and asparagine 239 each coordinate Mn(2+). Residues 394-512 (GFVSLSQRSE…SKAERVAAQG (119 aa)) form a regulatory domain region.

It belongs to the alpha-IPM synthase/homocitrate synthase family. LeuA type 1 subfamily. Homodimer. Mn(2+) is required as a cofactor.

The protein localises to the cytoplasm. It carries out the reaction 3-methyl-2-oxobutanoate + acetyl-CoA + H2O = (2S)-2-isopropylmalate + CoA + H(+). Its pathway is amino-acid biosynthesis; L-leucine biosynthesis; L-leucine from 3-methyl-2-oxobutanoate: step 1/4. Functionally, catalyzes the condensation of the acetyl group of acetyl-CoA with 3-methyl-2-oxobutanoate (2-ketoisovalerate) to form 3-carboxy-3-hydroxy-4-methylpentanoate (2-isopropylmalate). The sequence is that of 2-isopropylmalate synthase from Paracidovorax citrulli (strain AAC00-1) (Acidovorax citrulli).